The sequence spans 434 residues: Probable transcription factor HMS1 (434 aa).

One can recognise a bHLH domain in the interval 266–341; it reads TGRVSHNIIE…TKSIEYICHL (76 aa). The interval 365-434 is disordered; that stretch reads HLTEPSQPLS…DMDFNNAGDF (70 aa). Polar residues-rich tracts occupy residues 368–382 and 402–423; these read EPSQ…SEQV and PLHN…TNNS.

In terms of assembly, interacts with the G1/S-specific cyclin PCL1. In terms of processing, phosphorylated by the cyclin-CDK complex PCL1-PHO85.

It localises to the nucleus. Involved in exit from mitosis and pseudohyphal differentiation. This Saccharomyces cerevisiae (strain ATCC 204508 / S288c) (Baker's yeast) protein is Probable transcription factor HMS1 (HMS1).